Consider the following 197-residue polypeptide: Fucoxanthin-chlorophyll a-c binding protein F, chloroplastic (197 aa).

Residues 1–31 (MKFAVFASLLASAAAFAPAQQSARTSVATNM) constitute a chloroplast transit peptide. 3 helical membrane-spanning segments follow: residues 73–94 (ISML…PGDI), 114–134 (ISTA…IAVM), and 174–196 (GRAA…SLIP).

It belongs to the fucoxanthin chlorophyll protein family. As to quaternary structure, the LHC complex of chromophytic algae is composed of fucoxanthin, chlorophyll A and C bound non-covalently by fucoxanthin chlorophyll proteins (FCPs). The ratio of the pigments in lhc; fucoxanthin: chlorophyll C: chlorophyll A is (0.6-1): (0.1-0.3): (1).

It is found in the plastid. It localises to the chloroplast thylakoid membrane. Its function is as follows. The light-harvesting complex (LHC) functions as a light receptor, it captures and delivers excitation energy to photosystems with which it is closely associated. In chromophytic algae, LHC is associated with photosystem II, energy being transferred from fucoxanthin and chlorophyll C to chlorophyll A and the photosynthetic reaction centers where it is used to synthesize ATP and reducing power. The sequence is that of Fucoxanthin-chlorophyll a-c binding protein F, chloroplastic (FCPF) from Phaeodactylum tricornutum (Diatom).